Consider the following 608-residue polypeptide: Threonine--tRNA ligase (608 aa).

An editing domain region spans residues 1-143 (MRVLYIHAER…SFKPEEGRAD (143 aa)). Catalytic regions lie at residues 194-490 (PKYL…PRLP) and 195-490 (KYLE…PRLP). Positions 287, 338, and 459 each coordinate Zn(2+).

The protein belongs to the class-II aminoacyl-tRNA synthetase family. In terms of assembly, homodimer. The cofactor is Zn(2+).

It localises to the cytoplasm. The enzyme catalyses tRNA(Thr) + L-threonine + ATP = L-threonyl-tRNA(Thr) + AMP + diphosphate + H(+). Catalyzes the attachment of threonine to tRNA(Thr) in a two-step reaction: L-threonine is first activated by ATP to form Thr-AMP and then transferred to the acceptor end of tRNA(Thr). Also edits incorrectly charged L-seryl-tRNA(Thr). In Pyrobaculum aerophilum (strain ATCC 51768 / DSM 7523 / JCM 9630 / CIP 104966 / NBRC 100827 / IM2), this protein is Threonine--tRNA ligase.